The following is a 149-amino-acid chain: Large ribosomal subunit protein uL15 (149 aa).

The segment covering 1 to 11 has biased composition (basic and acidic residues); that stretch reads MSDPIKLHDLR. Positions 1–44 are disordered; it reads MSDPIKLHDLRPAPGAKKAKTRVGRGEASKGKTAGRGTKGTKAR.

Belongs to the universal ribosomal protein uL15 family. As to quaternary structure, part of the 50S ribosomal subunit.

Its function is as follows. Binds to the 23S rRNA. The chain is Large ribosomal subunit protein uL15 from Corynebacterium jeikeium (strain K411).